The sequence spans 270 residues: Urease accessory protein UreD (270 aa).

Belongs to the UreD family. As to quaternary structure, ureD, UreF and UreG form a complex that acts as a GTP-hydrolysis-dependent molecular chaperone, activating the urease apoprotein by helping to assemble the nickel containing metallocenter of UreC. The complex may form in the order UreABCD, UreABCDF, UreABCDFG. The UreE protein probably delivers the nickel in a GTPase-dependent fashion.

Its subcellular location is the cytoplasm. Necessary for the functional incorporation of the urease nickel metallocenter. This chain is Urease accessory protein UreD, found in Klebsiella aerogenes (Enterobacter aerogenes).